A 363-amino-acid polypeptide reads, in one-letter code: Chorismate synthase (363 aa).

R48 contributes to the NADP(+) binding site. Residues R125 to S127, N238 to A239, G278, K293 to S297, and R319 contribute to the FMN site.

This sequence belongs to the chorismate synthase family. As to quaternary structure, homotetramer. It depends on FMNH2 as a cofactor.

The enzyme catalyses 5-O-(1-carboxyvinyl)-3-phosphoshikimate = chorismate + phosphate. It participates in metabolic intermediate biosynthesis; chorismate biosynthesis; chorismate from D-erythrose 4-phosphate and phosphoenolpyruvate: step 7/7. Functionally, catalyzes the anti-1,4-elimination of the C-3 phosphate and the C-6 proR hydrogen from 5-enolpyruvylshikimate-3-phosphate (EPSP) to yield chorismate, which is the branch point compound that serves as the starting substrate for the three terminal pathways of aromatic amino acid biosynthesis. This reaction introduces a second double bond into the aromatic ring system. The polypeptide is Chorismate synthase (Acinetobacter baumannii (strain SDF)).